We begin with the raw amino-acid sequence, 185 residues long: Tetratricopeptide repeat protein 36 homolog (185 aa).

TPR repeat units follow at residues 53-86 (SRELELQGVLLTEKGSFDEALKVFQLALNQAQRA), 88-119 (VLNNRAQTLRLAKRDGEALDDLNKALEMASDQ), and 125-158 (CHAHCQRGVLYRKLDNLDAARSDFEAAAQLGSKF).

The protein belongs to the TTC36 family.

The protein is Tetratricopeptide repeat protein 36 homolog of Drosophila pseudoobscura pseudoobscura (Fruit fly).